A 233-amino-acid chain; its full sequence is 2-C-methyl-D-erythritol 4-phosphate cytidylyltransferase (233 aa).

This sequence belongs to the IspD/TarI cytidylyltransferase family. IspD subfamily.

The catalysed reaction is 2-C-methyl-D-erythritol 4-phosphate + CTP + H(+) = 4-CDP-2-C-methyl-D-erythritol + diphosphate. The protein operates within isoprenoid biosynthesis; isopentenyl diphosphate biosynthesis via DXP pathway; isopentenyl diphosphate from 1-deoxy-D-xylulose 5-phosphate: step 2/6. Its function is as follows. Catalyzes the formation of 4-diphosphocytidyl-2-C-methyl-D-erythritol from CTP and 2-C-methyl-D-erythritol 4-phosphate (MEP). In Nitrosomonas eutropha (strain DSM 101675 / C91 / Nm57), this protein is 2-C-methyl-D-erythritol 4-phosphate cytidylyltransferase.